We begin with the raw amino-acid sequence, 776 residues long: Rho guanine nucleotide exchange factor 6 (776 aa).

Residues 1-111 (MNPEEQIVTW…TLLAVNKATE (111 aa)) form the Calponin-homology (CH) domain. Positions 115-151 (SERPCGRSSSLSAANTSQTNPQGAVSSTVSGLQRQSK) are disordered. The segment covering 121-151 (RSSSLSAANTSQTNPQGAVSSTVSGLQRQSK) has biased composition (polar residues). S126 is modified (phosphoserine). Phosphothreonine is present on T133. Phosphoserine is present on residues S144 and S150. An SH3 domain is found at 160-219 (SHQLIVKARFNFKQTNEDELSVCKGDIIYVTRVEEGGWWEGTLNGRTGWFPSNYVREIKS). At S225 the chain carries Phosphoserine. Positions 241–421 (YYTVVLQNIL…KTLMGQCQDL (181 aa)) constitute a DH domain. Positions 443–548 (DIKNLGNVIF…WLEQLNRLIR (106 aa)) constitute a PH domain. A Phosphoserine modification is found at S488. The span at 561–572 (SSSCSAHSSFSS) shows a compositional bias: low complexity. Positions 561-581 (SSSCSAHSSFSSTGQPRGPLE) are disordered. Phosphoserine occurs at positions 640 and 684.

In terms of assembly, interacts with PAK kinases through the SH3 domain. Interacts with GIT1. Component of cytoplasmic complexes, which also contain PXN, GIT1 and PAK1. Interacts with PARVB. Interacts with BIN2. Identified in a complex with BIN2 and GIT2. Interacts with PARVG; the guanine nucleotide exchange factor activity of ARHGEF6 is essential for PARVG-induced enhancement of cell spreading. In terms of tissue distribution, ubiquitous.

It is found in the cell projection. Its subcellular location is the lamellipodium. In terms of biological role, acts as a RAC1 guanine nucleotide exchange factor (GEF). This chain is Rho guanine nucleotide exchange factor 6 (ARHGEF6), found in Homo sapiens (Human).